Here is an 897-residue protein sequence, read N- to C-terminus: Pre-mRNA-splicing factor CWC22 homolog (897 aa).

The span at 1–10 (MSSSRSQSPE) shows a compositional bias: polar residues. Residues 1-155 (MSSSRSQSPE…EKKKKEPLDI (155 aa)) form a disordered region. 3 stretches are compositionally biased toward basic and acidic residues: residues 36–54 (SSEKSASRSQSPRESREVS), 93–107 (RSKETRESESPEKSP), and 131–155 (RSSERKQSEEPAPLPEKKKKEPLDI). An MIF4G domain is found at 194-382 (KKKIHGLVNR…ETAMQIRKDK (189 aa)). Residues 444 to 472 (NADISDEDGGDELDDEEEGSDVEEAPKKT) are disordered. Residues 447-466 (ISDEDGGDELDDEEEGSDVE) are compositionally biased toward acidic residues. The region spanning 485–601 (AFRREVYLTM…DWKILADMKM (117 aa)) is the MI domain. Low complexity-rich tracts occupy residues 689–710 (LDQLKAESSSDSSSSSDSSDSS) and 720–730 (DSSSDSSSSSE). The interval 689–897 (LDQLKAESSS…VESDDRRRRR (209 aa)) is disordered. Positions 743-897 (NSEESSKKKE…VESDDRRRRR (155 aa)) are enriched in basic and acidic residues.

Belongs to the CWC22 family. Expressed in germ cells, oocytes, and sperm cells.

The protein localises to the nucleus. It is found in the nucleus speckle. Functionally, required for pre-mRNA splicing and for exon-junction complex (EJC) assembly. Hinders EIF4A3 from non-specifically binding RNA and escorts it to the splicing machinery to promote EJC assembly on mature mRNAs. Through its role in EJC assembly, required for nonsense-mediated mRNA decay. Plays a role in the nuclear retention of unspliced mRNAs. Plays a role in sex determination. Required for early embryogenesis and tissue differentiation. In Caenorhabditis elegans, this protein is Pre-mRNA-splicing factor CWC22 homolog.